Consider the following 554-residue polypeptide: Formate--tetrahydrofolate ligase (554 aa).

Thr65–Thr72 contacts ATP.

This sequence belongs to the formate--tetrahydrofolate ligase family.

The catalysed reaction is (6S)-5,6,7,8-tetrahydrofolate + formate + ATP = (6R)-10-formyltetrahydrofolate + ADP + phosphate. The protein operates within one-carbon metabolism; tetrahydrofolate interconversion. The protein is Formate--tetrahydrofolate ligase of Petrotoga mobilis (strain DSM 10674 / SJ95).